Reading from the N-terminus, the 171-residue chain is Serine acetyltransferase (171 aa).

The protein belongs to the transferase hexapeptide repeat family.

It is found in the cytoplasm. The enzyme catalyses L-serine + acetyl-CoA = O-acetyl-L-serine + CoA. The protein operates within amino-acid biosynthesis; L-cysteine biosynthesis; L-cysteine from L-serine: step 1/2. This chain is Serine acetyltransferase (cysE), found in Helicobacter pylori (strain J99 / ATCC 700824) (Campylobacter pylori J99).